Here is a 411-residue protein sequence, read N- to C-terminus: Ferrochelatase, mitochondrial (411 aa).

A mitochondrion-targeting transit peptide spans 1–41; sequence MAAFRAAHRLLGHILRNESSAGLVTQRWSSSAAVASVPKSS. The tract at residues 34–55 is disordered; the sequence is VASVPKSSDPKPHAQPDKRKPK. Residues 41-51 show a composition bias toward basic and acidic residues; the sequence is SDPKPHAQPDK. Arginine 102, tyrosine 110, and serine 117 together coordinate protoporphyrin IX. Cysteine 183 contacts [2Fe-2S] cluster. Residues histidine 217 and aspartate 370 contribute to the active site. [2Fe-2S] cluster is bound by residues cysteine 390, cysteine 393, and cysteine 398.

This sequence belongs to the ferrochelatase family. Homodimer. Homotetramer. [2Fe-2S] cluster serves as cofactor.

Its subcellular location is the mitochondrion inner membrane. It catalyses the reaction heme b + 2 H(+) = protoporphyrin IX + Fe(2+). Its pathway is porphyrin-containing compound metabolism; protoheme biosynthesis; protoheme from protoporphyrin-IX: step 1/1. Its function is as follows. Catalyzes the ferrous insertion into protoporphyrin IX. This is Ferrochelatase, mitochondrial from Xenopus laevis (African clawed frog).